The following is a 144-amino-acid chain: L-fucose mutarotase (144 aa).

The active-site Proton donor is the His22. Substrate contacts are provided by residues Asp30, Arg109, and 131–133; that span reads YGN.

The protein belongs to the RbsD / FucU family. FucU mutarotase subfamily. In terms of assembly, homodecamer.

The protein resides in the cytoplasm. It carries out the reaction alpha-L-fucose = beta-L-fucose. The protein operates within carbohydrate metabolism; L-fucose metabolism. Functionally, involved in the anomeric conversion of L-fucose. The polypeptide is L-fucose mutarotase (Histophilus somni (strain 129Pt) (Haemophilus somnus)).